A 456-amino-acid polypeptide reads, in one-letter code: uncharacterized protein (456 aa).

The TRAM domain occupies 3-61 (TIKKNEVKTGKVIDLTHEGHGVVKVDRYPIFIPNALIDEEIKFKLIKVKKNFAIGKLIE). The [4Fe-4S] cluster site is built by Cys74, Cys80, Cys83, and Cys162. Positions 286, 315, 336, and 384 each coordinate S-adenosyl-L-methionine. The active-site Nucleophile is Cys411.

The protein belongs to the class I-like SAM-binding methyltransferase superfamily. RNA M5U methyltransferase family.

This is an uncharacterized protein from Staphylococcus epidermidis (strain ATCC 35984 / DSM 28319 / BCRC 17069 / CCUG 31568 / BM 3577 / RP62A).